Reading from the N-terminus, the 101-residue chain is Large ribosomal subunit protein bL28 (101 aa).

It belongs to the bacterial ribosomal protein bL28 family.

The sequence is that of Large ribosomal subunit protein bL28 from Caulobacter sp. (strain K31).